The sequence spans 21 residues: Outer membrane protein P2 (21 aa).

Disulfide bond interactions within and between MOMP molecules and other components form high molecular-weight oligomers.

Its subcellular location is the cell outer membrane. In terms of biological role, structural rigidity of the outer membrane of elementary bodies and porin forming, permitting diffusion of solutes through the intracellular reticulate body membrane. Binds carcinoembryonic antigen (CEA). The protein is Outer membrane protein P2 of Glaesserella parasuis (Haemophilus parasuis).